The following is a 316-amino-acid chain: Apolipoprotein E (316 aa).

Positions 1-18 (MKVLWVAVVVALLAGCQA) are cleaved as a signal peptide. Repeat copies occupy residues 79–100 (ALMEETMKEVKAYKEELEGQLG), 101–122 (PMAQETQARVSKELQAAQARLG), 123–144 (SDMEDLRNRLAQYRSEVQAMLG), 145–166 (QSTEELRARMASHLRKLRKRLL), 167–188 (RDADDLKKRLAVYQAGASEGAE), 189–210 (RSLSAVRERFGPLVEQGQSRAA), 211–232 (TLSTLAGQPLLERAEAWRQKLH), and 233–254 (GRLEEVGVRAQDRLDKIRQQLE). Residues 79-254 (ALMEETMKEV…RLDKIRQQLE (176 aa)) form an 8 X 22 AA approximate tandem repeats region. The residue at position 142 (M142) is a Methionine sulfoxide. S146 is modified (phosphoserine; by FAM20C). The segment at 157–167 (HLRKLRKRLLR) is LDL and other lipoprotein receptors binding. 161–164 (LRKR) provides a ligand contact to heparin. Positions 209 to 289 (AATLSTLAGQ…SWFEPLVEDM (81 aa)) are lipid-binding and lipoprotein association. T211 is a glycosylation site (O-linked (GalNAc...) threonine). Position 228-235 (228-235 (RQKLHGRL)) interacts with heparin. The segment at 265–316 (NQMRLQAEAFQARLRSWFEPLVEDMQRQWAGLVEKVQLALRPSPTSPPSENH) is homooligomerization. A specificity for association with VLDL region spans residues 277–289 (RLRSWFEPLVEDM).

This sequence belongs to the apolipoprotein A1/A4/E family. As to quaternary structure, homotetramer. May interact with ABCA1; functionally associated with ABCA1 in the biogenesis of HDLs. May interact with APP/A4 amyloid-beta peptide; the interaction is extremely stable in vitro but its physiological significance is unclear. May interact with MAPT. May interact with MAP2. In the cerebrospinal fluid, interacts with secreted SORL1. Interacts with PMEL; this allows the loading of PMEL luminal fragment on ILVs to induce fibril nucleation. Post-translationally, APOE exists as multiple glycosylated and sialylated glycoforms within cells and in plasma. The extent of glycosylation and sialylation are tissue and context specific. Glycated in plasma VLDL. In terms of processing, phosphorylated by FAM20C in the extracellular medium.

It localises to the secreted. Its subcellular location is the extracellular space. The protein resides in the extracellular matrix. It is found in the extracellular vesicle. The protein localises to the endosome. It localises to the multivesicular body. In terms of biological role, APOE is an apolipoprotein, a protein associating with lipid particles, that mainly functions in lipoprotein-mediated lipid transport between organs via the plasma and interstitial fluids. APOE is a core component of plasma lipoproteins and is involved in their production, conversion and clearance. Apolipoproteins are amphipathic molecules that interact both with lipids of the lipoprotein particle core and the aqueous environment of the plasma. As such, APOE associates with chylomicrons, chylomicron remnants, very low density lipoproteins (VLDL) and intermediate density lipoproteins (IDL) but shows a preferential binding to high-density lipoproteins (HDL). It also binds a wide range of cellular receptors including the LDL receptor/LDLR and the very low-density lipoprotein receptor/VLDLR that mediate the cellular uptake of the APOE-containing lipoprotein particles. Finally, APOE also has a heparin-binding activity and binds heparan-sulfate proteoglycans on the surface of cells, a property that supports the capture and the receptor-mediated uptake of APOE-containing lipoproteins by cells. The sequence is that of Apolipoprotein E (APOE) from Bos mutus grunniens (Wild yak).